Reading from the N-terminus, the 66-residue chain is Beta-mammal toxin Cv2 (66 aa).

The LCN-type CS-alpha/beta domain occupies 1–66 (KEGYIVNHST…VWPLPKKTCN (66 aa)). 4 cysteine pairs are disulfide-bonded: Cys-12-Cys-65, Cys-16-Cys-41, Cys-25-Cys-46, and Cys-29-Cys-48.

In terms of tissue distribution, expressed by the venom gland.

It localises to the secreted. Its activity is regulated as follows. Is susceptible to be slightly neutralized by human antibodies scFvs 10FG2. Its function is as follows. Beta toxins bind voltage-independently at site-4 of sodium channels (Nav) and reduces peak current and shifts the voltage of activation toward more negative potentials thereby affecting sodium channel activation and promoting spontaneous and repetitive firing. This toxin is slightly toxic to mice. This chain is Beta-mammal toxin Cv2, found in Centruroides villegasi (Scorpion).